The primary structure comprises 224 residues: MTDKNDALTLKKRFRGYFPVVIDVETAGFNAQTDALLEICAVTLSMDENGDLHPASTIHFHVEPFEGANLEKAALEFTGIYDPFSPLRGAVSEDHALKEIYKLVRKEQKAADCSRAIIVAHNAHFDHSFVMAASERCKLKRVPFHPFATFDTATLSGLAFGQTVLAKACKTAGMEFDNREAHSALYDTQKTAELFCTIVNQWKALGGWPLVNDDEDNNNDADLD.

Residues Val-20–Phe-195 form the Exonuclease domain. The Mg(2+) site is built by Asp-23, Glu-25, His-182, and Asp-187. His-182 (proton donor/acceptor) is an active-site residue.

This sequence belongs to the RNase T family. In terms of assembly, homodimer. Mg(2+) is required as a cofactor.

In terms of biological role, trims short 3' overhangs of a variety of RNA species, leaving a one or two nucleotide 3' overhang. Responsible for the end-turnover of tRNA: specifically removes the terminal AMP residue from uncharged tRNA (tRNA-C-C-A). Also appears to be involved in tRNA biosynthesis. In Vibrio cholerae serotype O1 (strain ATCC 39315 / El Tor Inaba N16961), this protein is Ribonuclease T.